The sequence spans 304 residues: Bacteriochlorophyll synthase 33 kDa chain (304 aa).

Transmembrane regions (helical) follow at residues 26 to 46, 51 to 71, 94 to 114, 117 to 137, 151 to 171, 178 to 198, 227 to 247, 250 to 270, and 279 to 299; these read VTWF…NVPI, GVVV…SQAA, IPGL…LVVG, LGSW…AYSV, GLVG…VLLA, GFPI…IMTI, IACT…YLFS, YHAT…SVWM, and WYNG…AFAI.

The protein resides in the cell membrane. It functions in the pathway porphyrin-containing compound metabolism; bacteriochlorophyll biosynthesis (light-independent). In terms of biological role, catalyzes the esterification of bacteriochlorophyllide a by geranylgeraniol-PPi. The sequence is that of Bacteriochlorophyll synthase 33 kDa chain (bchG) from Rhodobacter capsulatus (strain ATCC BAA-309 / NBRC 16581 / SB1003).